Here is an 821-residue protein sequence, read N- to C-terminus: TORTIFOLIA1-like protein 1 (821 aa).

HEAT repeat units follow at residues 69-110, 114-151, 163-201, 205-242, and 245-282; these read PDSP…SYTD, SQLA…QFLK, SSLV…SATE, AAFQ…VGAI, and QSLE…HSSS. Phosphoserine is present on S406. Disordered stretches follow at residues 416 to 437 and 553 to 610; these read PSRQ…NTSV and MSIQ…RAWD. The stretch at 501-554 forms a coiled coil; it reads PPLQRQLLHLERQQTHIMNMLQDFMGGSHDGMISLENRVRGLERIVEEMSREMS. A compositionally biased stretch (polar residues) spans 579–590; it reads YGPSSRNTQTST.

As to expression, expressed at low levels in roots, hypocotyls, stems, flowers, siliques, cotyledons, and leaves. Particularly present in hydathodes of cotyledons and root hairs.

It localises to the cytoplasm. The protein resides in the cytoskeleton. Its function is as follows. Plant-specific microtubule-associated protein (MAP) that regulates the orientation of cortical microtubules and the direction of organ growth. In Arabidopsis thaliana (Mouse-ear cress), this protein is TORTIFOLIA1-like protein 1.